Reading from the N-terminus, the 834-residue chain is U-box domain-containing protein 33 (834 aa).

Residues 232-308 (FSTPESEHQH…SPSSFPDGVD (77 aa)) are disordered. Composition is skewed to polar residues over residues 243–273 (SRVQSTDSVQQLVSNGSSTEQSGRVSDGSLN) and 284–293 (SEVTGSATVM). Residues 334-462 (LRRQKAEKNA…SHAETSTLQL (129 aa)) adopt a coiled-coil conformation. Residues 481–744 (FDSTLKIGEG…EVWRVLEPMR (264 aa)) form the Protein kinase domain. ATP-binding positions include 487–495 (IGEGGYGSI) and lysine 508. The active-site Proton acceptor is aspartate 603. A U-box domain is found at 762-834 (IAPPYFICPI…AIQEWLQHHL (73 aa)).

This sequence belongs to the protein kinase superfamily. Ser/Thr protein kinase family.

It carries out the reaction L-seryl-[protein] + ATP = O-phospho-L-seryl-[protein] + ADP + H(+). The enzyme catalyses L-threonyl-[protein] + ATP = O-phospho-L-threonyl-[protein] + ADP + H(+). The catalysed reaction is S-ubiquitinyl-[E2 ubiquitin-conjugating enzyme]-L-cysteine + [acceptor protein]-L-lysine = [E2 ubiquitin-conjugating enzyme]-L-cysteine + N(6)-ubiquitinyl-[acceptor protein]-L-lysine.. It participates in protein modification; protein ubiquitination. Its function is as follows. Functions as an E3 ubiquitin ligase. This is U-box domain-containing protein 33 (PUB33) from Arabidopsis thaliana (Mouse-ear cress).